Here is a 752-residue protein sequence, read N- to C-terminus: Cytosolic phospholipase A2 (752 aa).

Residues 1-178 form a phospholipid binding region; the sequence is MSFIDPYQHI…MKKLLGPKKS (178 aa). The residue at position 2 (Ser-2) is a Phosphoserine. Residues 6-122 form the C2 domain; the sequence is PYQHIIVEHQ…KVGEKKEVPF (117 aa). 7 residues coordinate Ca(2+): Asp-40, Thr-41, Asp-43, Asn-65, Asp-93, Ala-94, and Asn-95. The PLA2c domain occupies 140–740; sequence SCPDLRFSMA…SNVEARKFFN (601 aa). The active-site Nucleophile is Ser-228. The residue at position 268 (Thr-268) is a Phosphothreonine. The segment at 427–457 is disordered; it reads KHIVSNDSSDSDDEAQGPKGTENEDAEREYQ. A phosphoserine mark is found at Ser-434, Ser-435, and Ser-437. A Phosphoserine; by MAPK modification is found at Ser-505. Phosphoserine is present on residues Ser-511 and Ser-515. Lys-541 participates in a covalent cross-link: Glycyl lysine isopeptide (Lys-Gly) (interchain with G-Cter in SUMO2). Catalysis depends on Asp-549, which acts as the Proton acceptor. A Glycyl lysine isopeptide (Lys-Gly) (interchain with G-Cter in SUMO2) cross-link involves residue Lys-606. A phosphoserine mark is found at Ser-727 and Ser-729.

In terms of assembly, interacts with KAT5. In terms of processing, phosphorylated at both Ser-505 and Ser-727 in response to mitogenic stimuli. In brain tissue, expressed in low levels in olfactory mitral and granule cells, in hippocampal pyramidal cells and in dentate and cerebellar granule cells.

It localises to the cytoplasm. Its subcellular location is the golgi apparatus membrane. The protein localises to the nucleus envelope. It carries out the reaction a 1,2-diacyl-sn-glycero-3-phosphocholine + H2O = a 1-acyl-sn-glycero-3-phosphocholine + a fatty acid + H(+). It catalyses the reaction a 1-O-alkyl-2-acyl-sn-glycero-3-phosphocholine + H2O = a 1-O-alkyl-sn-glycero-3-phosphocholine + a fatty acid + H(+). The enzyme catalyses a 1-acyl-sn-glycero-3-phosphocholine + H2O = sn-glycerol 3-phosphocholine + a fatty acid + H(+). The catalysed reaction is 1-hexadecanoyl-2-(5Z,8Z,11Z,14Z-eicosatetraenoyl)-sn-glycero-3-phosphocholine + H2O = 1-hexadecanoyl-sn-glycero-3-phosphocholine + (5Z,8Z,11Z,14Z)-eicosatetraenoate + H(+). It carries out the reaction 1,2-di-(5Z,8Z,11Z,14Z-eicosatetraenoyl)-sn-glycero-3-phosphocholine + H2O = 1-(5Z,8Z,11Z,14Z-eicosatetraenoyl)-sn-glycero-3-phosphocholine + (5Z,8Z,11Z,14Z)-eicosatetraenoate + H(+). It catalyses the reaction 1-octadecanoyl-2-(5Z,8Z,11Z,14Z-eicosatetraenoyl)-sn-glycero-3-phosphocholine + H2O = 1-octadecanoyl-sn-glycero-3-phosphocholine + (5Z,8Z,11Z,14Z)-eicosatetraenoate + H(+). The enzyme catalyses 1-hexadecanoyl-2-(9Z,12Z-octadecadienoyl)-sn-glycero-3-phosphocholine + H2O = (9Z,12Z)-octadecadienoate + 1-hexadecanoyl-sn-glycero-3-phosphocholine + H(+). The catalysed reaction is 1-octadecanoyl-2-(9Z,12Z,15Z-octadecatrienoyl)-sn-glycero-3-phosphocholine + H2O = (9Z,12Z,15Z)-octadecatrienoate + 1-octadecanoyl-sn-glycero-3-phosphocholine + H(+). It carries out the reaction 1-(5Z,8Z,11Z,14Z-eicosatetraenoyl)-2-hexadecanoyl-sn-glycero-3-phosphocholine + H2O = 1-(5Z,8Z,11Z,14Z-eicosatetraenoyl)-sn-glycero-3-phosphocholine + hexadecanoate + H(+). It catalyses the reaction 1-O-hexadecyl-2-(5Z,8Z,11Z,14Z)-eicosatetraenoyl-sn-glycero-3-phosphocholine + H2O = 1-O-hexadecyl-sn-glycero-3-phosphocholine + (5Z,8Z,11Z,14Z)-eicosatetraenoate + H(+). The enzyme catalyses 1,2-di-(9Z-octadecenoyl)-sn-glycero-3-phospho-(1'-sn-glycerol) + H2O = 1-(9Z-octadecenoyl)-sn-glycero-3-phospho-(1'-sn-glycerol) + (9Z)-octadecenoate + H(+). The catalysed reaction is 1-octadecanoyl-2-(5Z,8Z,11Z,14Z-eicosatetraenoyl)-sn-glycero-3-phosphate + H2O = 1-octadecanoyl-sn-glycero-3-phosphate + (5Z,8Z,11Z,14Z)-eicosatetraenoate + H(+). It carries out the reaction 1-hexadecanoyl-sn-glycero-3-phosphocholine + H2O = sn-glycerol 3-phosphocholine + hexadecanoate + H(+). It catalyses the reaction 2-(prostaglandin E2)-sn-glycero-3-phosphoethanolamine + H2O = sn-glycero-3-phosphoethanolamine + prostaglandin E2 + H(+). The enzyme catalyses 2-[(15S)-hydroxy-(5Z,8Z,11Z,13E)-eicosatetraenoyl]-sn-glycero-3-phosphocholine + H2O = (15S)-hydroxy-(5Z,8Z,11Z,13E)-eicosatetraenoate + sn-glycerol 3-phosphocholine + H(+). The catalysed reaction is 2-[(15R)-hydroxy-(5Z,8Z,11Z,13E)-eicosatetraenoyl]-sn-glycero-3-phosphocholine + H2O = (15R)-hydroxy-(5Z,8Z,11Z,13E)-eicosatetraenoate + sn-glycerol 3-phosphocholine + H(+). It carries out the reaction 2-(prostaglandin E2)-sn-glycero-3-phosphocholine + H2O = prostaglandin E2 + sn-glycerol 3-phosphocholine + H(+). It catalyses the reaction 2-[(11R)-hydroxy-(5Z,8Z,12E,14Z)-eicosatetraenoyl]-sn-glycero-3-phosphocholine + H2O = (11R)-hydroxy-(5Z,8Z,12E,14Z)-eicosatetraenoate + sn-glycerol 3-phosphocholine + H(+). The enzyme catalyses 1-(5Z,8Z,11Z,14Z-eicosatetraenoyl)-2-O-hexadecyl-sn-glycero-3-phosphocholine + H2O = 2-O-hexadecyl-sn-glycero-3-phosphocholine + (5Z,8Z,11Z,14Z)-eicosatetraenoate + H(+). The catalysed reaction is 1-octadecanoyl-2-(5Z,8Z,11Z,14Z-eicosatetraenoyl)-sn-glycero-3-phosphocholine + glycerol = 1-(5Z,8Z,11Z,14Z-eicosatetraenoyl)-glycerol + 1-octadecanoyl-sn-glycero-3-phosphocholine. It carries out the reaction 1-octadecanoyl-2-(9Z,12Z,15Z-octadecatrienoyl)-sn-glycero-3-phosphocholine + glycerol = 1-(9Z,12Z,15Z-octadecatrienoyl)-glycerol + 1-octadecanoyl-sn-glycero-3-phosphocholine. The protein operates within lipid metabolism; arachidonate metabolism. It participates in membrane lipid metabolism; glycerophospholipid metabolism. It functions in the pathway lipid metabolism; prostaglandin biosynthesis. Its pathway is lipid metabolism; leukotriene B4 biosynthesis. With respect to regulation, activated by cytosolic calcium, which is necessary for binding to membrane lipids. Activated by phosphorylation in response to mitogenic stimuli. Has primarily calcium-dependent phospholipase and lysophospholipase activities, with a major role in membrane lipid remodeling and biosynthesis of lipid mediators of the inflammatory response. Plays an important role in embryo implantation and parturition through its ability to trigger prostanoid production. Preferentially hydrolyzes the ester bond of the fatty acyl group attached at sn-2 position of phospholipids (phospholipase A2 activity). Selectively hydrolyzes sn-2 arachidonoyl group from membrane phospholipids, providing the precursor for eicosanoid biosynthesis via the cyclooxygenase pathway. In an alternative pathway of eicosanoid biosynthesis, hydrolyzes sn-2 fatty acyl chain of eicosanoid lysophopholipids to release free bioactive eicosanoids. Hydrolyzes the ester bond of the fatty acyl group attached at sn-1 position of phospholipids (phospholipase A1 activity) only if an ether linkage rather than an ester linkage is present at the sn-2 position. This hydrolysis is not stereospecific. Has calcium-independent phospholipase A2 and lysophospholipase activities in the presence of phosphoinositides. Has O-acyltransferase activity. Catalyzes the transfer of fatty acyl chains from phospholipids to a primary hydroxyl group of glycerol (sn-1 or sn-3), potentially contributing to monoacylglycerol synthesis. The sequence is that of Cytosolic phospholipase A2 (Pla2g4a) from Rattus norvegicus (Rat).